The sequence spans 372 residues: Queuine tRNA-ribosyltransferase (372 aa).

Asp92 serves as the catalytic Proton acceptor. Substrate contacts are provided by residues 92-96 (DSGGF), Asp146, Gln188, and Gly215. The RNA binding stretch occupies residues 246–252 (GIGTLRE). Catalysis depends on Asp265, which acts as the Nucleophile. The interval 270–274 (TRLGR) is RNA binding; important for wobble base 34 recognition. Zn(2+) contacts are provided by Cys303, Cys305, Cys308, and His334.

This sequence belongs to the queuine tRNA-ribosyltransferase family. As to quaternary structure, homodimer. Within each dimer, one monomer is responsible for RNA recognition and catalysis, while the other monomer binds to the replacement base PreQ1. It depends on Zn(2+) as a cofactor.

The enzyme catalyses 7-aminomethyl-7-carbaguanine + guanosine(34) in tRNA = 7-aminomethyl-7-carbaguanosine(34) in tRNA + guanine. The protein operates within tRNA modification; tRNA-queuosine biosynthesis. Catalyzes the base-exchange of a guanine (G) residue with the queuine precursor 7-aminomethyl-7-deazaguanine (PreQ1) at position 34 (anticodon wobble position) in tRNAs with GU(N) anticodons (tRNA-Asp, -Asn, -His and -Tyr). Catalysis occurs through a double-displacement mechanism. The nucleophile active site attacks the C1' of nucleotide 34 to detach the guanine base from the RNA, forming a covalent enzyme-RNA intermediate. The proton acceptor active site deprotonates the incoming PreQ1, allowing a nucleophilic attack on the C1' of the ribose to form the product. After dissociation, two additional enzymatic reactions on the tRNA convert PreQ1 to queuine (Q), resulting in the hypermodified nucleoside queuosine (7-(((4,5-cis-dihydroxy-2-cyclopenten-1-yl)amino)methyl)-7-deazaguanosine). This is Queuine tRNA-ribosyltransferase from Synechococcus sp. (strain CC9605).